We begin with the raw amino-acid sequence, 685 residues long: E3 ubiquitin-protein ligase RNF6 (685 aa).

Basic and acidic residues-rich tracts occupy residues 1–10 (MNQSRSRSDG), 17–29 (PQDH…ERRW), and 88–107 (DLRD…SSHE). Disordered regions lie at residues 1–29 (MNQS…ERRW), 81–107 (EQLA…SSHE), 121–142 (GNAT…RTNP), 168–273 (DYTD…REGQ), 286–345 (RSNV…RRRG), and 499–576 (EADS…NPNN). 3 stretches are compositionally biased toward polar residues: residues 199 to 213 (SQTS…SNIP), 250 to 264 (ASRT…QSGG), and 286 to 297 (RSNVTVRNTNQR). Residues 303–313 (LRSTSNSRSRS) show a composition bias toward low complexity. 2 stretches are compositionally biased toward polar residues: residues 314–325 (PIQRQSGTVYHN) and 519–528 (ELSNLGTDNN). Residues 632 to 673 (CSVCISDYVTGNKLRQLPCMHEFHIHCIDRWLSENCTCPICR) form an RING-type zinc finger.

The protein belongs to the RNF12 family. In terms of tissue distribution, weakly expressed in peripheral blood, spleen, prostate, testis and ovary. According to a report, it is preferentially expressed in testis and ovary and hardly detected in other tissues.

The protein localises to the nucleus. Its subcellular location is the cytoplasm. It localises to the cell projection. It is found in the axon. The protein resides in the PML body. The catalysed reaction is S-ubiquitinyl-[E2 ubiquitin-conjugating enzyme]-L-cysteine + [acceptor protein]-L-lysine = [E2 ubiquitin-conjugating enzyme]-L-cysteine + N(6)-ubiquitinyl-[acceptor protein]-L-lysine.. The protein operates within protein modification; protein ubiquitination. Its function is as follows. E3 ubiquitin-protein ligase mediating 'Lys-48'-linked polyubiquitination of LIMK1 and its subsequent targeting to the proteasome for degradation. Negatively regulates axonal outgrowth through regulation of the LIMK1 turnover. Mediates 'Lys-6' and 'Lys-27'-linked polyubiquitination of AR/androgen receptor thereby modulating its transcriptional activity. May also bind DNA and function as a transcriptional regulator. Mediates polyubiquitination of QKI in macrophages, leading to its degradation. This chain is E3 ubiquitin-protein ligase RNF6, found in Homo sapiens (Human).